Here is a 147-residue protein sequence, read N- to C-terminus: UPF0735 ACT domain-containing protein BH1214 (147 aa).

Residues 70–145 (TLSINLEDRS…AVEKVELVGS (76 aa)) enclose the ACT domain.

It belongs to the UPF0735 family.

The sequence is that of UPF0735 ACT domain-containing protein BH1214 from Halalkalibacterium halodurans (strain ATCC BAA-125 / DSM 18197 / FERM 7344 / JCM 9153 / C-125) (Bacillus halodurans).